The following is a 542-amino-acid chain: CTP synthase (542 aa).

Residues 1-265 (MARYVFITGG…DSEVLAAFGI (265 aa)) form an amidoligase domain region. Ser-13 is a CTP binding site. UTP is bound at residue Ser-13. Residues 14-19 (SLGKGI) and Asp-71 each bind ATP. Asp-71 and Glu-139 together coordinate Mg(2+). CTP is bound by residues 146-148 (DIE), 186-191 (KTKPTQ), and Lys-222. UTP is bound by residues 186–191 (KTKPTQ) and Lys-222. The 251-residue stretch at 291 to 541 (TIAIVGKYTG…VEAAVEQSRL (251 aa)) folds into the Glutamine amidotransferase type-1 domain. Gly-353 lines the L-glutamine pocket. Cys-380 acts as the Nucleophile; for glutamine hydrolysis in catalysis. L-glutamine-binding positions include 381–384 (FGMQ), Glu-404, and Arg-469. Catalysis depends on residues His-514 and Glu-516.

It belongs to the CTP synthase family. In terms of assembly, homotetramer.

The enzyme catalyses UTP + L-glutamine + ATP + H2O = CTP + L-glutamate + ADP + phosphate + 2 H(+). It catalyses the reaction L-glutamine + H2O = L-glutamate + NH4(+). It carries out the reaction UTP + NH4(+) + ATP = CTP + ADP + phosphate + 2 H(+). The protein operates within pyrimidine metabolism; CTP biosynthesis via de novo pathway; CTP from UDP: step 2/2. Allosterically activated by GTP, when glutamine is the substrate; GTP has no effect on the reaction when ammonia is the substrate. The allosteric effector GTP functions by stabilizing the protein conformation that binds the tetrahedral intermediate(s) formed during glutamine hydrolysis. Inhibited by the product CTP, via allosteric rather than competitive inhibition. Catalyzes the ATP-dependent amination of UTP to CTP with either L-glutamine or ammonia as the source of nitrogen. Regulates intracellular CTP levels through interactions with the four ribonucleotide triphosphates. This chain is CTP synthase, found in Agrobacterium fabrum (strain C58 / ATCC 33970) (Agrobacterium tumefaciens (strain C58)).